The sequence spans 297 residues: Mitochondrial substrate carrier family protein P (297 aa).

Solcar repeat units lie at residues 12–98, 104–189, and 201–293; these read KPSW…IKNH, SSSF…LKRI, and ISGT…LSNF. Transmembrane regions (helical) follow at residues 15–35, 66–86, 107–127, 165–185, 207–227, and 262–282; these read WVSFLSGGLAGVTAKSAVAPL, GIKGLWRGNSATILRVFPYAA, FQIFLAGSAAGGIAVCATYPL, IQPTLIGILPYGGISFSTFEF, LIAGGIAGGVAQTVAYPFDVV, and ILALYKGLSINYVKVIPTASI.

It belongs to the mitochondrial carrier (TC 2.A.29) family.

The protein localises to the mitochondrion inner membrane. Functionally, mitochondrial solute carriers shuttle metabolites, nucleotides, and cofactors through the mitochondrial inner membrane. Required for the accumulation of coenzyme A in the mitochondrial matrix. The chain is Mitochondrial substrate carrier family protein P (mcfP) from Dictyostelium discoideum (Social amoeba).